Reading from the N-terminus, the 557-residue chain is Alpha-barbatene synthase (557 aa).

The (2E,6E)-farnesyl diphosphate site is built by Arg-273, Asp-310, Asp-314, Arg-451, and Asp-454. The Mg(2+) site is built by Asp-310 and Asp-314. The DDXXD motif signature appears at 310 to 314; the sequence is DDACD. Mg(2+) is bound by residues Asp-454, Asp-455, and Asp-462.

Belongs to the terpene synthase family. Tpsa subfamily. Monomer. Mg(2+) serves as cofactor. Requires Mn(2+) as cofactor. As to expression, expressed exclusively in flowers. Expressed in intrafloral nectaries and in the funiculus within the ovules.

Its subcellular location is the cytoplasm. The enzyme catalyses (2E,6E)-farnesyl diphosphate = (+)-alpha-barbatene + diphosphate. It carries out the reaction (2E,6E)-farnesyl diphosphate = (+)-thujopsene + diphosphate. It catalyses the reaction (2E,6E)-farnesyl diphosphate = (+)-beta-chamigrene + diphosphate. The catalysed reaction is (2E,6E)-farnesyl diphosphate = (+)-beta-barbatene + diphosphate. The enzyme catalyses (2E,6E)-farnesyl diphosphate = beta-sesquiphellandrene + diphosphate. It carries out the reaction (2E,6E)-farnesyl diphosphate = (S)-beta-bisabolene + diphosphate. It catalyses the reaction (2E,6E)-farnesyl diphosphate = (-)-alpha-cuprenene + diphosphate. The catalysed reaction is (2E,6E)-farnesyl diphosphate = alpha-zingiberene + diphosphate. The enzyme catalyses (2E,6E)-farnesyl diphosphate = beta-acoradiene + diphosphate. It carries out the reaction (2E,6E)-farnesyl diphosphate = (E)-beta-farnesene + diphosphate. It participates in secondary metabolite biosynthesis; terpenoid biosynthesis. Its function is as follows. Involved in the biosynthesis of over 15 sesquiterpenes (C15). The major products are (+)-alpha-barbatene (27.3%), (+)-thujopsene (17.8%) and (+)-beta-chamigrene (9.9%). Can use farnesyl diphosphate or geranyl diphosphate as substrates, but not geranylgeranyl diphosphate. This chain is Alpha-barbatene synthase, found in Arabidopsis thaliana (Mouse-ear cress).